A 109-amino-acid polypeptide reads, in one-letter code: Homeobox protein E30 (109 aa).

Residues 1 to 12 are compositionally biased toward basic residues; it reads GPRTRRVKRSHN. Residues 1 to 27 form a disordered region; that stretch reads GPRTRRVKRSHNGKNGSPEEKRPRTAF. Positions 20–79 form a DNA-binding region, homeobox; sequence EKRPRTAFSAEQLARLKREFAENRYLTERRRQQLSRDLGLTEAQIKIWFQNKRAKIKKAS.

This sequence belongs to the engrailed homeobox family.

The protein localises to the nucleus. This is Homeobox protein E30 from Apis mellifera (Honeybee).